Consider the following 127-residue polypeptide: Phosphoribosyl-AMP cyclohydrolase (127 aa).

D96 provides a ligand contact to Mg(2+). Residue C97 coordinates Zn(2+). Positions 98 and 100 each coordinate Mg(2+). Residues C113 and C120 each coordinate Zn(2+).

It belongs to the PRA-CH family. In terms of assembly, homodimer. Mg(2+) serves as cofactor. Requires Zn(2+) as cofactor.

The protein localises to the cytoplasm. It carries out the reaction 1-(5-phospho-beta-D-ribosyl)-5'-AMP + H2O = 1-(5-phospho-beta-D-ribosyl)-5-[(5-phospho-beta-D-ribosylamino)methylideneamino]imidazole-4-carboxamide. Its pathway is amino-acid biosynthesis; L-histidine biosynthesis; L-histidine from 5-phospho-alpha-D-ribose 1-diphosphate: step 3/9. Catalyzes the hydrolysis of the adenine ring of phosphoribosyl-AMP. This Corynebacterium jeikeium (strain K411) protein is Phosphoribosyl-AMP cyclohydrolase.